We begin with the raw amino-acid sequence, 241 residues long: Probable transcriptional regulator PhnF (241 aa).

The HTH gntR-type domain maps to 11–78 (PTRYQEIAAK…QGVGVLVLMR (68 aa)). The H-T-H motif DNA-binding region spans 38 to 57 (EQQLAARFEVNRHTLRRAID).

In terms of biological role, belongs to an operon involved in alkylphosphonate uptake and C-P lyase. Exact function not known. By similarity could be a transcriptional regulator. This Escherichia coli (strain K12) protein is Probable transcriptional regulator PhnF (phnF).